The sequence spans 292 residues: Elongation factor Ts (292 aa).

The tract at residues 81–84 (TDFV) is involved in Mg(2+) ion dislocation from EF-Tu.

This sequence belongs to the EF-Ts family.

It is found in the cytoplasm. Functionally, associates with the EF-Tu.GDP complex and induces the exchange of GDP to GTP. It remains bound to the aminoacyl-tRNA.EF-Tu.GTP complex up to the GTP hydrolysis stage on the ribosome. In Acidithiobacillus ferrooxidans (strain ATCC 23270 / DSM 14882 / CIP 104768 / NCIMB 8455) (Ferrobacillus ferrooxidans (strain ATCC 23270)), this protein is Elongation factor Ts.